Here is a 129-residue protein sequence, read N- to C-terminus: Lysozyme C (129 aa).

The C-type lysozyme domain occupies 1 to 129; that stretch reads KVFGRCELAA…VRVWIKGCRL (129 aa). 4 disulfide bridges follow: Cys-6/Cys-127, Cys-30/Cys-115, Cys-64/Cys-80, and Cys-76/Cys-94. Residues Glu-35 and Asp-52 contribute to the active site.

Belongs to the glycosyl hydrolase 22 family. As to quaternary structure, monomer.

It localises to the secreted. The enzyme catalyses Hydrolysis of (1-&gt;4)-beta-linkages between N-acetylmuramic acid and N-acetyl-D-glucosamine residues in a peptidoglycan and between N-acetyl-D-glucosamine residues in chitodextrins.. In terms of biological role, lysozymes have primarily a bacteriolytic function; those in tissues and body fluids are associated with the monocyte-macrophage system and enhance the activity of immunoagents. This is Lysozyme C (LYZ) from Numida meleagris (Helmeted guineafowl).